Reading from the N-terminus, the 462-residue chain is dTDP-4-dehydro-2,6-dideoxy-D-glucose 3-dehydratase (462 aa).

Pyridoxal 5'-phosphate contacts are provided by residues 112-113, aspartate 220, and serine 241; that span reads GS. Catalysis depends on histidine 246, which acts as the Proton donor/acceptor. Residue asparagine 314 participates in pyridoxal 5'-phosphate binding.

Belongs to the DegT/DnrJ/EryC1 family. Homodimer. Requires pyridoxal 5'-phosphate as cofactor.

It carries out the reaction dTDP-4-dehydro-2,6-dideoxy-alpha-D-glucose + 2 reduced [2Fe-2S]-[ferredoxin] + 2 H(+) = dTDP-4-dehydro-2,3,6-trideoxy-alpha-D-hexopyranose + 2 oxidized [2Fe-2S]-[ferredoxin] + H2O. Functionally, involved in the biosynthesis of forosamine ((4-dimethylamino)-2,3,4,6-tetradeoxy-alpha-D-threo-hexopyranose), a highly deoxygenated sugar component of several bioactive natural products such as the insecticidal spinosyns A and D. Catalyzes C-3 deoxygenation of dTDP-4-keto-2,6-dideoxy-alpha-D-glucose to yield dTDP-4-keto-2,3,6-trideoxy-D-glucose via a combined transamination-deoxygenation reaction. The catalysis is initiated by a transamination step in which pyridoxal 5'-phosphate (PLP) is converted to pyridoxamine 5'-phosphate (PMP) in the presence of L-glutamate. This coenzyme then forms a Schiff base with dTDP-4-keto-2,6-dideoxy-alpha-D-glucose and the resulting adduct undergoes a PMP-mediated beta-dehydration reaction to give a sugar enamine intermediate, which after a 2 electrons reduction and hydrolysis yields dTDP-4-keto-2,3,6-trideoxy-D-glucose as a product. Requires cellular reductase (ferredoxin or flavodoxin reductase) rather than a specific partner reductase. L-glutamate is 20-fold more efficient than L-aspartate as an amino donor. In the absence of an electron source and in the presence of L-glutamate, catalyzes a transamination reaction, converting dTDP-4-keto-2,6-dideoxy-alpha-D-glucose to dTDP-4-amino-2,4,6-trideoxy-D-glucose. This chain is dTDP-4-dehydro-2,6-dideoxy-D-glucose 3-dehydratase, found in Saccharopolyspora spinosa.